The primary structure comprises 403 residues: Digeranylgeranylglycerophospholipid reductase 1 (403 aa).

FAD-binding residues include Ala14, Asp33, Cys44, Ala45, Gly47, Arg98, Val122, Asp277, Gly289, and Ile290.

This sequence belongs to the geranylgeranyl reductase family. DGGGPL reductase subfamily. FAD serves as cofactor.

The catalysed reaction is a 2,3-bis-O-phytanyl-sn-glycerol 1-phospholipid + 8 A = a 2,3-bis-O-(geranylgeranyl)-sn-glycerol 1-phospholipid + 8 AH2. It catalyses the reaction 2,3-bis-O-(phytanyl)-sn-glycerol 1-phosphate + 8 A = 2,3-bis-O-(geranylgeranyl)-sn-glycerol 1-phosphate + 8 AH2. It carries out the reaction CDP-2,3-bis-O-(geranylgeranyl)-sn-glycerol + 8 AH2 = CDP-2,3-bis-O-(phytanyl)-sn-glycerol + 8 A. The enzyme catalyses archaetidylserine + 8 AH2 = 2,3-bis-O-phytanyl-sn-glycero-3-phospho-L-serine + 8 A. It participates in membrane lipid metabolism; glycerophospholipid metabolism. In terms of biological role, is involved in the reduction of 2,3-digeranylgeranylglycerophospholipids (unsaturated archaeols) into 2,3-diphytanylglycerophospholipids (saturated archaeols) in the biosynthesis of archaeal membrane lipids. Catalyzes the formation of archaetidic acid (2,3-di-O-phytanyl-sn-glyceryl phosphate) from 2,3-di-O-geranylgeranylglyceryl phosphate (DGGGP) via the hydrogenation of each double bond of the isoprenoid chains. Is also probably able to reduce double bonds of geranyl groups in CDP-2,3-bis-O-(geranylgeranyl)-sn-glycerol and archaetidylserine, thus acting at various stages in the biosynthesis of archaeal membrane lipids. The sequence is that of Digeranylgeranylglycerophospholipid reductase 1 from Methanosphaera stadtmanae (strain ATCC 43021 / DSM 3091 / JCM 11832 / MCB-3).